The chain runs to 445 residues: DNA primase DnaG (445 aa).

In terms of domain architecture, Toprim spans 166 to 252 (DAIVVVEGRS…SVEDLSRSEV (87 aa)). Mg(2+)-binding residues include glutamate 172, aspartate 214, and aspartate 216. Residues 276–355 (EEMSQAGEST…NGDGPTIPSL (80 aa)) are disordered. The span at 284 to 298 (STTADGGAVAAATSD) shows a compositional bias: low complexity. Positions 303–313 (NQPSPSSQTGS) are enriched in polar residues. Residues 324–337 (SVVDNSNATAVADA) show a composition bias toward low complexity.

Belongs to the archaeal DnaG primase family. In terms of assembly, forms a ternary complex with MCM helicase and DNA. The cofactor is Mg(2+).

It carries out the reaction ssDNA + n NTP = ssDNA/pppN(pN)n-1 hybrid + (n-1) diphosphate.. In terms of biological role, RNA polymerase that catalyzes the synthesis of short RNA molecules used as primers for DNA polymerase during DNA replication. The sequence is that of DNA primase DnaG from Haloarcula marismortui (strain ATCC 43049 / DSM 3752 / JCM 8966 / VKM B-1809) (Halobacterium marismortui).